The primary structure comprises 183 residues: Ubiquinol-cytochrome c reductase iron-sulfur subunit (183 aa).

A helical membrane pass occupies residues 21 to 41 (LIYGTTAVGAVGVALAVWPFI). The 94-residue stretch at 88-181 (IVVARAVDPA…YAFTDDTTVL (94 aa)) folds into the Rieske domain. Residues Cys-121, His-123, Cys-145, and His-148 each contribute to the [2Fe-2S] cluster site. Residues Cys-126 and Cys-147 are joined by a disulfide bond.

It belongs to the Rieske iron-sulfur protein family. As to quaternary structure, the main subunits of complex b-c1 are: cytochrome b, cytochrome c1 and the Rieske protein. [2Fe-2S] cluster serves as cofactor.

Its subcellular location is the cell inner membrane. The enzyme catalyses a quinol + 2 Fe(III)-[cytochrome c](out) = a quinone + 2 Fe(II)-[cytochrome c](out) + 2 H(+)(out). In terms of biological role, component of the ubiquinol-cytochrome c reductase complex (complex III or cytochrome b-c1 complex), which is a respiratory chain that generates an electrochemical potential coupled to ATP synthesis. The polypeptide is Ubiquinol-cytochrome c reductase iron-sulfur subunit (petA) (Rhodospirillum rubrum).